The primary structure comprises 708 residues: MTTESQAAERLAFLAAEIARHNALYHGEDAPEISDADYDALMRENAALEAEYPHLVRADSPSKLVGAAPSGHLAKVAHAQPMLSLDNAFADEDVVDFVGRVRRYLSLGAEEPVALTAEPKIDGLSCSLRYEKGVLVLAATRGDGTTGEDVTANVRTIDDIPERLRGGDLLSSPPDVFEIRGEVYMAKADFAALNARLLAEAEDPAKARQFANPRNAAAGSLRQKDPGVTASRPLRFLAHGWGEVSALPADTQKGVMDAIAAWGLPVSDDFVRVDGAAQALSHYRAIEAKRADLPFDIDGVVYKVDRLDWQKRLGFVARAPRWAIAHKFPAEKAQTLLKDIDIQVGRTGKLTPVARLEPVTVGGVVVTNATLHNADEIGRLDVHPGDRVVVQRAGDVIPQIVENLSRDETRDPWPFPQTCPECGSAAEREPGEVDYRCTGGLICPAQRVERLRHFVSRHALDIEGLGLTHIESFFRDGLVQSPADIFRLTKDILLTRERWAEVSAGNLIAAIDAKRHPPLDRFLFALGIRHVGEVTARDLARRYRSWEGLKAMIDRTIEARDAAVQAIGETDEKFAARTAKELAAIVETPGVGPEVALALVDFFAEPHNADAVADLLSQLQPADVIHETRASEVSGKTVVFTGTLETMSRDEAKAQAEALGAKVAGSVSAKTDLVVAGPGAGSKLKKASDLGIAVTDEAGWAKIVADAQ.

Residues 35-39 (DADYD), 84-85 (SL), and Glu118 contribute to the NAD(+) site. Residue Lys120 is the N6-AMP-lysine intermediate of the active site. Residues Arg141, Glu182, Lys303, and Lys327 each coordinate NAD(+). Positions 419, 422, 437, and 443 each coordinate Zn(2+). Positions 628-708 (TRASEVSGKT…GWAKIVADAQ (81 aa)) constitute a BRCT domain.

This sequence belongs to the NAD-dependent DNA ligase family. LigA subfamily. Mg(2+) is required as a cofactor. It depends on Mn(2+) as a cofactor.

The enzyme catalyses NAD(+) + (deoxyribonucleotide)n-3'-hydroxyl + 5'-phospho-(deoxyribonucleotide)m = (deoxyribonucleotide)n+m + AMP + beta-nicotinamide D-nucleotide.. DNA ligase that catalyzes the formation of phosphodiester linkages between 5'-phosphoryl and 3'-hydroxyl groups in double-stranded DNA using NAD as a coenzyme and as the energy source for the reaction. It is essential for DNA replication and repair of damaged DNA. The protein is DNA ligase of Rhizorhabdus wittichii (strain DSM 6014 / CCUG 31198 / JCM 15750 / NBRC 105917 / EY 4224 / RW1) (Sphingomonas wittichii).